Reading from the N-terminus, the 580-residue chain is Probable glucomannan 4-beta-mannosyltransferase 2 (580 aa).

Residues Met1 to Arg12 are compositionally biased toward polar residues. Residues Met1 to Leu33 form a disordered region. Residues Leu15 to Thr27 show a composition bias toward low complexity. A helical membrane pass occupies residues Ala85–Leu105. Asp182 is an active-site residue. Substrate contacts are provided by Asp241 and Asp243. The active site involves Asp335. 4 helical membrane-spanning segments follow: residues Ala414 to Val434, Val437 to Ile457, Ile528 to Val548, and Tyr554 to Gly574.

The protein belongs to the glycosyltransferase 2 family. Plant cellulose synthase-like A subfamily.

The protein localises to the golgi apparatus membrane. It carries out the reaction GDP-mannose + (glucomannan)n = GDP + (glucomannan)n+1.. Its function is as follows. Probable mannan synthase which consists of a 4-beta-mannosyltransferase activity on mannan using GDP-mannose. The beta-1,4-mannan product is the backbone for galactomannan synthesis by galactomannan galactosyltransferase. Galactomannan is a noncellulosic polysaccharides of plant cell wall. The sequence is that of Probable glucomannan 4-beta-mannosyltransferase 2 from Oryza sativa subsp. japonica (Rice).